A 366-amino-acid chain; its full sequence is MASSLRAAISKIKRDDVGQQVCPNYVMLRSSVTTKVVRNVVEYQIRTGGFFSCLAMLRPLQYAKRERLLGQRNLERISTRDILQTRDLHSLCMPTPDAPMSNHQAATMRELICSYFKVDHTDGLKYIPMDERYSPSSLARLFTMGMAGLHITTEPSYKRVPIMHLAADLDCMTLALPYMITLDGDTVVPVAPTLSAEQLLDDGLKGLACMDISYGCEVDASNRSAGDQSMDSSRCINELYCEETAEAICVLKTCLVLNCMQFKLEMDDLAHNATELDKIQMMIPFSERVFRMASSFATIDAQCFRFCVMMKDKNLKIDMRETMRLWTRSALDDSVVTSSLSISLDRGRWVAADATDARLLVFPIRV.

An important for ssRNA-binding and formation of complexes region spans residues 1-11 (MASSLRAAISK).

Belongs to the orthoreovirus sigma-NS protein family. As to quaternary structure, homooligomer; in presence of RNA. Interacts with protein mu-NS; this interaction allows the localization of sigma-NS to the viral factories. Interacts with host G3BP1 (via C-terminus); this interaction induces the relocalization of G3BP1 and other SG proteins to the viral factories periphery.

Its subcellular location is the host cytoplasm. Protein that binds to ssRNA and participates with protein mu-NS in forming the matrix of viral factories, which are large inclusions in the host cytoplasm where replication intermediates are assembled and viral RNA replication takes place. Plays a role in the inhibition of the integrated stress response (ISR) to escape from host cell translational shutoff. Participates in the disruption of stress granules (SG) through its association with host G3BP1 and mu-NS. In Mammalia (T1L), this protein is Protein sigma-NS (S3).